A 206-amino-acid chain; its full sequence is Large ribosomal subunit protein uL4 (206 aa).

Positions 44 to 80 (KRAGTHSVKTRSTISGGGAKPWRQKGTGRARSGSNRS) are disordered.

Belongs to the universal ribosomal protein uL4 family. As to quaternary structure, part of the 50S ribosomal subunit.

In terms of biological role, one of the primary rRNA binding proteins, this protein initially binds near the 5'-end of the 23S rRNA. It is important during the early stages of 50S assembly. It makes multiple contacts with different domains of the 23S rRNA in the assembled 50S subunit and ribosome. Functionally, forms part of the polypeptide exit tunnel. This chain is Large ribosomal subunit protein uL4, found in Oleidesulfovibrio alaskensis (strain ATCC BAA-1058 / DSM 17464 / G20) (Desulfovibrio alaskensis).